A 407-amino-acid polypeptide reads, in one-letter code: Large ribosomal subunit protein uL4y (407 aa).

The tract at residues 57-96 is disordered; sequence PYAVSKKAGHQTSAESWGTGRAVSRIPRVPGGGTHRAGQA.

Belongs to the universal ribosomal protein uL4 family.

In Arabidopsis thaliana (Mouse-ear cress), this protein is Large ribosomal subunit protein uL4y (RPL4D).